Here is a 358-residue protein sequence, read N- to C-terminus: MSAFVGKYADELIKTAKYIATPGKGILAADESTGTIGKRFASINVENIESNRQALRELLFTSPGTFPCLSGVILFEETLYQKTTDGKPFVELLMENGVIPGIKVDKGVVDLAGTNGETTTQGLDSLGARCQEYYKAGARFAKWRAVLKIGATEPSELSIQENAKGLARYAIICQENGLVPIVEPEVLTDGSHDIKKCAAVTETVLAAVYKALNDHHVLLEGTLLKPNMVTPGSDSPKVAPEVIAEYTVTALRRTVPPAVPGIVFLSGGQSEEEATLNLNAMNKLDVLKPWTLTFSFGRALQQSTLKAWAGKTENVAKAQATFLTRCKGNSDATLGKYTGGASGDSAASESLYEEGYKY.

The residue at position 2 (S2) is an N-acetylserine. R39 provides a ligand contact to substrate. The residue at position 68 (C68) is an S-glutathionyl cysteine; transient. At C173 the chain carries S-glutathionyl cysteine; transient; alternate. C173 bears the S-nitrosocysteine; transient; alternate mark. The active-site Proton acceptor is the E183. Residue K225 is the Schiff-base intermediate with dihydroxyacetone-P of the active site. Substrate-binding positions include 266–268 and R298; that span reads SGG. At S350 the chain carries Phosphoserine.

It belongs to the class I fructose-bisphosphate aldolase family. As to quaternary structure, homotetramer. Interacts with TRX3. In terms of processing, S-glutathionylated at Cys-68 and Cys-173. Post-translationally, S-nitrosylated at Cys-173. As to expression, expressed in rosette leaves and cauline leaves.

The protein localises to the cytoplasm. The protein resides in the cytosol. The enzyme catalyses beta-D-fructose 1,6-bisphosphate = D-glyceraldehyde 3-phosphate + dihydroxyacetone phosphate. It functions in the pathway carbohydrate degradation; glycolysis; D-glyceraldehyde 3-phosphate and glycerone phosphate from D-glucose: step 4/4. Functionally, fructose-bisphosphate aldolase that plays a key role in glycolysis and gluconeogenesis. The chain is Fructose-bisphosphate aldolase 5, cytosolic from Arabidopsis thaliana (Mouse-ear cress).